The following is a 477-amino-acid chain: Endogenous retrovirus group V member 1 Env polyprotein (477 aa).

The N-terminal stretch at 1 to 21 (MTEKFLFLYLSLLPMPLLSQA) is a signal peptide. Residues 22-321 (QWNENSLVSF…NTTQPRQKRA (300 aa)) are Extracellular-facing. A glycan (N-linked (GlcNAc...) asparagine) is linked at Asn-68. The helical transmembrane segment at 322 to 342 (LGLILAGMGAAIGMIAPWGGF) threads the bilayer. At 343–477 (TYHDVTLRNL…LLSPLWPLSL (135 aa)) the chain is on the cytoplasmic side.

This sequence belongs to the gamma type-C retroviral envelope protein family. Expressed in placenta.

The protein resides in the membrane. The protein is Endogenous retrovirus group V member 1 Env polyprotein (ERVV-1) of Homo sapiens (Human).